We begin with the raw amino-acid sequence, 394 residues long: Actin-related protein 2-B (394 aa).

ATP is bound by residues 160-162, 214-218, and 305-310; these read GDG, RMMKE, and GGSTMY.

The protein belongs to the actin family. ARP2 subfamily. Component of the Arp2/3 complex composed of actr2/arp2, actr3/arp3, arpc1b, arpc2, arpc3, arpc4 and arpc5.

It localises to the cytoplasm. Its subcellular location is the cytoskeleton. It is found in the cell projection. The protein resides in the nucleus. In terms of biological role, ATP-binding component of the Arp2/3 complex, a multiprotein complex that mediates actin polymerization upon stimulation by nucleation-promoting factor (NPF). The Arp2/3 complex mediates the formation of branched actin networks in the cytoplasm, providing the force for cell motility. Seems to contact the pointed end of the daughter actin filament. In addition to its role in the cytoplasmic cytoskeleton, the Arp2/3 complex also promotes actin polymerization in the nucleus, thereby regulating gene transcription and repair of damaged DNA. The Arp2/3 complex promotes homologous recombination (HR) repair in response to DNA damage by promoting nuclear actin polymerization, leading to drive motility of double-strand breaks (DSBs). The chain is Actin-related protein 2-B (actr2b) from Danio rerio (Zebrafish).